The chain runs to 100 residues: Large ribosomal subunit protein uL23 (100 aa).

The protein belongs to the universal ribosomal protein uL23 family. Part of the 50S ribosomal subunit. Contacts protein L29, and trigger factor when it is bound to the ribosome.

In terms of biological role, one of the early assembly proteins it binds 23S rRNA. One of the proteins that surrounds the polypeptide exit tunnel on the outside of the ribosome. Forms the main docking site for trigger factor binding to the ribosome. The sequence is that of Large ribosomal subunit protein uL23 from Dechloromonas aromatica (strain RCB).